Reading from the N-terminus, the 181-residue chain is Large ribosomal subunit protein uL6 (181 aa).

It belongs to the universal ribosomal protein uL6 family. As to quaternary structure, part of the 50S ribosomal subunit.

Its function is as follows. This protein binds to the 23S rRNA, and is important in its secondary structure. It is located near the subunit interface in the base of the L7/L12 stalk, and near the tRNA binding site of the peptidyltransferase center. The sequence is that of Large ribosomal subunit protein uL6 from Saccharolobus solfataricus (strain ATCC 35092 / DSM 1617 / JCM 11322 / P2) (Sulfolobus solfataricus).